The following is a 385-amino-acid chain: Anhydro-N-acetylmuramic acid kinase (385 aa).

12–19 (GTSLDGID) contributes to the ATP binding site.

The protein belongs to the anhydro-N-acetylmuramic acid kinase family.

It carries out the reaction 1,6-anhydro-N-acetyl-beta-muramate + ATP + H2O = N-acetyl-D-muramate 6-phosphate + ADP + H(+). The protein operates within amino-sugar metabolism; 1,6-anhydro-N-acetylmuramate degradation. It functions in the pathway cell wall biogenesis; peptidoglycan recycling. Functionally, catalyzes the specific phosphorylation of 1,6-anhydro-N-acetylmuramic acid (anhMurNAc) with the simultaneous cleavage of the 1,6-anhydro ring, generating MurNAc-6-P. Is required for the utilization of anhMurNAc either imported from the medium or derived from its own cell wall murein, and thus plays a role in cell wall recycling. This is Anhydro-N-acetylmuramic acid kinase from Bacillus thuringiensis (strain Al Hakam).